The chain runs to 149 residues: Protegrin-4 (149 aa).

The first 29 residues, 1-29, serve as a signal peptide directing secretion; it reads METQRASLCLGRWSLWLLLLALVVPSASA. Positions 30 to 130 are excised as a propeptide; the sequence is QALSYREAVL…DITCNEVQGV (101 aa). A disordered region spans residues 61–80; the sequence is DQPPKADEDPGTPKPVSFTV. Intrachain disulfides connect C85/C96, C107/C124, C136/C145, and C138/C143. R148 is modified (arginine amide).

The protein belongs to the cathelicidin family.

The protein localises to the secreted. Functionally, microbicidal activity. This chain is Protegrin-4 (NPG4), found in Sus scrofa (Pig).